Here is a 212-residue protein sequence, read N- to C-terminus: Peptide methionine sulfoxide reductase MsrA (212 aa).

Residue Cys52 is part of the active site.

It belongs to the MsrA Met sulfoxide reductase family.

The catalysed reaction is L-methionyl-[protein] + [thioredoxin]-disulfide + H2O = L-methionyl-(S)-S-oxide-[protein] + [thioredoxin]-dithiol. The enzyme catalyses [thioredoxin]-disulfide + L-methionine + H2O = L-methionine (S)-S-oxide + [thioredoxin]-dithiol. In terms of biological role, has an important function as a repair enzyme for proteins that have been inactivated by oxidation. Catalyzes the reversible oxidation-reduction of methionine sulfoxide in proteins to methionine. In Salmonella choleraesuis (strain SC-B67), this protein is Peptide methionine sulfoxide reductase MsrA.